A 355-amino-acid polypeptide reads, in one-letter code: Peptide chain release factor 1 (355 aa).

At Gln234 the chain carries N5-methylglutamine.

The protein belongs to the prokaryotic/mitochondrial release factor family. Post-translationally, methylated by PrmC. Methylation increases the termination efficiency of RF1.

The protein resides in the cytoplasm. In terms of biological role, peptide chain release factor 1 directs the termination of translation in response to the peptide chain termination codons UAG and UAA. This chain is Peptide chain release factor 1, found in Metamycoplasma arthritidis (strain 158L3-1) (Mycoplasma arthritidis).